Consider the following 358-residue polypeptide: Glutamine synthetase (358 aa).

Residues 26 to 105 enclose the GS beta-grasp domain; it reads ILAEYIWIDG…VLAECWNADG (80 aa). In terms of domain architecture, GS catalytic spans 112 to 358; the sequence is HRHECAKIME…IMMETICGGI (247 aa).

Belongs to the glutamine synthetase family. As to quaternary structure, homooctamer.

It localises to the cytoplasm. The enzyme catalyses L-glutamate + NH4(+) + ATP = L-glutamine + ADP + phosphate + H(+). The polypeptide is Glutamine synthetase (GLN1) (Tuber borchii (White truffle)).